A 138-amino-acid chain; its full sequence is ATP synthase epsilon chain (138 aa).

It belongs to the ATPase epsilon chain family. In terms of assembly, F-type ATPases have 2 components, CF(1) - the catalytic core - and CF(0) - the membrane proton channel. CF(1) has five subunits: alpha(3), beta(3), gamma(1), delta(1), epsilon(1). CF(0) has three main subunits: a, b and c.

It localises to the cell inner membrane. Functionally, produces ATP from ADP in the presence of a proton gradient across the membrane. This chain is ATP synthase epsilon chain, found in Trichlorobacter lovleyi (strain ATCC BAA-1151 / DSM 17278 / SZ) (Geobacter lovleyi).